The chain runs to 1537 residues: DNA (cytosine-5)-methyltransferase 1 (1537 aa).

A compositionally biased stretch (pro residues) spans 1-13 (MPARSAPPPPALP). 2 disordered regions span residues 1-34 (MPARSAPPPPALPPALRRRLRDLERDEDSLSEKE) and 97-232 (RASN…DEKR). The 98-residue stretch at 8-105 (PPPALPPALR…SRASNGCAGN (98 aa)) folds into the DMAP1-binding domain. Positions 21 to 34 (RDLERDEDSLSEKE) are enriched in basic and acidic residues. The span at 129–154 (SSSSSSSSSSSSSSSSSSSSSLLPAP) shows a compositional bias: low complexity. The span at 171-194 (SPASSRVTRSSGRQPTILSVFSKG) shows a compositional bias: polar residues. An interaction with PCNA region spans residues 182-194 (GRQPTILSVFSKG). Residues 215 to 227 (KDEEEEEELEEKE) show a composition bias toward acidic residues. The Zn(2+) site is built by C263, C266, and H329. Residue S420 is modified to Phosphoserine. The segment at 558–604 (NAMKRRRCGVCEVCQQPECGKCKACQNMVKFGGSGRSKQACLQRRCP) adopts a CXXC-type zinc-finger fold. Residues C565, C568, C571, C576, C579, C582, C598, and C603 each contribute to the Zn(2+) site. Residues 614 to 638 (DEEVDDNIPEMPSPKKMLQGRKKKQ) form a disordered region. 2 BAH domains span residues 667–791 (ETLE…ETPP) and 883–1011 (HYRK…EDPP). Positions 1006 to 1050 (SFEDPPNHARSSGNKGKGKGKGKGKGKGKSSTTCEQSEPEPTELK) are disordered. Tandem repeats lie at residues 1020–1021 (KG), 1022–1023 (KG), 1024–1025 (KG), 1026–1027 (KG), 1028–1029 (KG), 1030–1031 (KG), and 1032–1033 (KG). Residues 1020 to 1035 (KGKGKGKGKGKGKGKS) are 8 X 2 AA tandem repeats of K-G. Residues 1021-1033 (GKGKGKGKGKGKG) are compositionally biased toward basic residues. Residues 1034–1035 (KS) form an 8; approximate repeat. The SAM-dependent MTase C5-type domain maps to 1054–1513 (LRTLDVFSGC…LEIRACVGAR (460 aa)). S-adenosyl-L-methionine is bound by residues S1061, 1065–1066 (GL), 1083–1084 (EM), 1105–1106 (DC), and C1106. Residue C1141 is part of the active site. Residues N1492 and V1494 each coordinate S-adenosyl-L-methionine. The disordered stretch occupies residues 1518–1537 (SGAAVAPPAPEKMEMTAAAD).

This sequence belongs to the class I-like SAM-binding methyltransferase superfamily. C5-methyltransferase family. In terms of assembly, homodimer. Interacts with PCNA. Testis and lung.

The protein localises to the nucleus. It catalyses the reaction a 2'-deoxycytidine in DNA + S-adenosyl-L-methionine = a 5-methyl-2'-deoxycytidine in DNA + S-adenosyl-L-homocysteine + H(+). Functionally, methylates CpG residues. Preferentially methylates hemimethylated DNA. It is responsible for maintaining methylation patterns established in development. Mediates transcriptional repression by direct binding to HDAC2. Plays a role in promoter hypermethylation and transcriptional silencing of tumor suppressor genes (TSGs) or other tumor-related genes. Also required to maintain a transcriptionally repressive state of genes in undifferentiated embryonic stem cells (ESCs). Associates at promoter regions of tumor suppressor genes (TSGs) leading to their gene silencing. The protein is DNA (cytosine-5)-methyltransferase 1 (DNMT1) of Gallus gallus (Chicken).